Here is a 394-residue protein sequence, read N- to C-terminus: Putative 8-amino-7-oxononanoate synthase (394 aa).

Arg-30 serves as a coordination point for substrate. Pyridoxal 5'-phosphate is bound at residue 117–118; the sequence is GY. His-142 is a substrate binding site. Pyridoxal 5'-phosphate-binding positions include Ser-190, 215–218, and 246–249; these read DEAH and TLSK. N6-(pyridoxal phosphate)lysine is present on Lys-249. Thr-364 contributes to the substrate binding site.

Belongs to the class-II pyridoxal-phosphate-dependent aminotransferase family. BioF subfamily. As to quaternary structure, homodimer. Pyridoxal 5'-phosphate is required as a cofactor.

It carries out the reaction 6-carboxyhexanoyl-[ACP] + L-alanine + H(+) = (8S)-8-amino-7-oxononanoate + holo-[ACP] + CO2. The protein operates within cofactor biosynthesis; biotin biosynthesis. In terms of biological role, catalyzes the decarboxylative condensation of pimeloyl-[acyl-carrier protein] and L-alanine to produce 8-amino-7-oxononanoate (AON), [acyl-carrier protein], and carbon dioxide. This Nostoc punctiforme (strain ATCC 29133 / PCC 73102) protein is Putative 8-amino-7-oxononanoate synthase (bioF).